The primary structure comprises 444 residues: Glutamate--tRNA ligase 2 (444 aa).

Residues 8-18 carry the 'HIGH' region motif; that stretch reads PSPTGHLHAGN. Residues 241–245 carry the 'KMSKS' region motif; that stretch reads KLSKR. Lys-244 provides a ligand contact to ATP.

Belongs to the class-I aminoacyl-tRNA synthetase family. Glutamate--tRNA ligase type 1 subfamily. In terms of assembly, monomer.

It localises to the cytoplasm. The enzyme catalyses tRNA(Glu) + L-glutamate + ATP = L-glutamyl-tRNA(Glu) + AMP + diphosphate. Catalyzes the attachment of glutamate to tRNA(Glu) in a two-step reaction: glutamate is first activated by ATP to form Glu-AMP and then transferred to the acceptor end of tRNA(Glu). This Acidiphilium cryptum (strain JF-5) protein is Glutamate--tRNA ligase 2.